Consider the following 353-residue polypeptide: UPF0283 membrane protein YcjF (353 aa).

The span at 1 to 19 shows a compositional bias: basic and acidic residues; it reads MSEPLKPRIDFAEPLKEEP. The disordered stretch occupies residues 1–35; that stretch reads MSEPLKPRIDFAEPLKEEPTSAFKAQQTFSEAESR. Residues 1-69 are Periplasmic-facing; sequence MSEPLKPRID…LRPKRSLWRK (69 aa). A helical membrane pass occupies residues 70–90; that stretch reads MVMGGLALFGASVVGQGVQWT. The Cytoplasmic segment spans residues 91–99; sequence MNAWQTQDW. A helical membrane pass occupies residues 100–120; that stretch reads VALGGCAAGALIVGAGVGSVV. Residues 121 to 212 lie on the Periplasmic side of the membrane; sequence TEWRRLWRLR…ARREISRFAA (92 aa). A helical transmembrane segment spans residues 213–233; that stretch reads ESTLMIAVSPLALVDMAFIAW. The Cytoplasmic segment spans residues 234-353; it reads RNLRLINRIA…LQKSKSSPEK (120 aa).

The protein belongs to the UPF0283 family.

The protein localises to the cell inner membrane. The chain is UPF0283 membrane protein YcjF (ycjF) from Salmonella typhimurium (strain LT2 / SGSC1412 / ATCC 700720).